The sequence spans 87 residues: MANTAQARKRARQSVERNKHNSSLRSMLRTAIKRVRQSIAAGDKAAASEVFQKATSVIDRVADKNIIHKNKAARHKSRLAAAIKALA.

Residues 1-24 (MANTAQARKRARQSVERNKHNSSL) are disordered.

Belongs to the bacterial ribosomal protein bS20 family.

Functionally, binds directly to 16S ribosomal RNA. The protein is Small ribosomal subunit protein bS20 of Bordetella petrii (strain ATCC BAA-461 / DSM 12804 / CCUG 43448).